A 282-amino-acid polypeptide reads, in one-letter code: Undecaprenyl-diphosphatase (282 aa).

6 helical membrane-spanning segments follow: residues 90 to 110, 121 to 141, 165 to 185, 194 to 214, 228 to 248, and 256 to 276; these read YRLG…GLLF, LWVV…AEYL, LALV…LFLG, FGFL…LPDA, QLLV…SWFL, and MYWF…LLAT.

This sequence belongs to the UppP family.

Its subcellular location is the cell membrane. The enzyme catalyses di-trans,octa-cis-undecaprenyl diphosphate + H2O = di-trans,octa-cis-undecaprenyl phosphate + phosphate + H(+). In terms of biological role, catalyzes the dephosphorylation of undecaprenyl diphosphate (UPP). Confers resistance to bacitracin. In Mycobacterium marinum (strain ATCC BAA-535 / M), this protein is Undecaprenyl-diphosphatase.